The following is a 102-amino-acid chain: Putative ribosomal protein uL13-like (102 aa).

The protein belongs to the universal ribosomal protein uL13 family.

This chain is Putative ribosomal protein uL13-like (RPL13AP3), found in Homo sapiens (Human).